We begin with the raw amino-acid sequence, 475 residues long: Ribulose bisphosphate carboxylase large chain (475 aa).

A propeptide spanning residues 1-2 (MS) is cleaved from the precursor. Pro-3 is modified (N-acetylproline). Lys-14 is modified (N6,N6,N6-trimethyllysine). Residues Asn-123 and Thr-173 each contribute to the substrate site. Lys-175 serves as the catalytic Proton acceptor. Lys-177 lines the substrate pocket. Mg(2+) is bound by residues Lys-201, Asp-203, and Glu-204. N6-carboxylysine is present on Lys-201. His-294 (proton acceptor) is an active-site residue. Substrate-binding residues include Arg-295, His-327, and Ser-379.

The protein belongs to the RuBisCO large chain family. Type I subfamily. In terms of assembly, heterohexadecamer of 8 large chains and 8 small chains; disulfide-linked. The disulfide link is formed within the large subunit homodimers. Mg(2+) is required as a cofactor. In terms of processing, the disulfide bond which can form in the large chain dimeric partners within the hexadecamer appears to be associated with oxidative stress and protein turnover.

It localises to the plastid. The protein resides in the chloroplast. It carries out the reaction 2 (2R)-3-phosphoglycerate + 2 H(+) = D-ribulose 1,5-bisphosphate + CO2 + H2O. It catalyses the reaction D-ribulose 1,5-bisphosphate + O2 = 2-phosphoglycolate + (2R)-3-phosphoglycerate + 2 H(+). Its function is as follows. RuBisCO catalyzes two reactions: the carboxylation of D-ribulose 1,5-bisphosphate, the primary event in carbon dioxide fixation, as well as the oxidative fragmentation of the pentose substrate in the photorespiration process. Both reactions occur simultaneously and in competition at the same active site. The polypeptide is Ribulose bisphosphate carboxylase large chain (Castanea sativa (Sweet chestnut)).